Here is a 443-residue protein sequence, read N- to C-terminus: Chromosome partition protein MukF (443 aa).

The tract at residues 209 to 237 (LDETSGNLRELQDTLNAAGDKLQAQLLRI) is leucine-zipper.

It belongs to the MukF family. In terms of assembly, interacts, and probably forms a ternary complex, with MukE and MukB via its C-terminal region. The complex formation is stimulated by calcium or magnesium. It is required for an interaction between MukE and MukB.

It is found in the cytoplasm. It localises to the nucleoid. Functionally, involved in chromosome condensation, segregation and cell cycle progression. May participate in facilitating chromosome segregation by condensation DNA from both sides of a centrally located replisome during cell division. Not required for mini-F plasmid partitioning. Probably acts via its interaction with MukB and MukE. Overexpression results in anucleate cells. It has a calcium binding activity. The polypeptide is Chromosome partition protein MukF (Actinobacillus pleuropneumoniae serotype 3 (strain JL03)).